A 327-amino-acid polypeptide reads, in one-letter code: Phenylalanine--tRNA ligase alpha subunit (327 aa).

Glu-252 lines the Mg(2+) pocket.

The protein belongs to the class-II aminoacyl-tRNA synthetase family. Phe-tRNA synthetase alpha subunit type 1 subfamily. Tetramer of two alpha and two beta subunits. The cofactor is Mg(2+).

Its subcellular location is the cytoplasm. It carries out the reaction tRNA(Phe) + L-phenylalanine + ATP = L-phenylalanyl-tRNA(Phe) + AMP + diphosphate + H(+). The protein is Phenylalanine--tRNA ligase alpha subunit of Proteus mirabilis (strain HI4320).